The primary structure comprises 185 residues: Ribosome-recycling factor (185 aa).

The protein belongs to the RRF family.

It localises to the cytoplasm. Its function is as follows. Responsible for the release of ribosomes from messenger RNA at the termination of protein biosynthesis. May increase the efficiency of translation by recycling ribosomes from one round of translation to another. The chain is Ribosome-recycling factor from Halalkalibacterium halodurans (strain ATCC BAA-125 / DSM 18197 / FERM 7344 / JCM 9153 / C-125) (Bacillus halodurans).